A 373-amino-acid polypeptide reads, in one-letter code: UDP-N-acetylglucosamine--N-acetylmuramyl-(pentapeptide) pyrophosphoryl-undecaprenol N-acetylglucosamine transferase (373 aa).

UDP-N-acetyl-alpha-D-glucosamine is bound by residues 14–16, N128, R165, S199, and Q295; that span reads TAG.

The protein belongs to the glycosyltransferase 28 family. MurG subfamily.

Its subcellular location is the cell membrane. It carries out the reaction di-trans,octa-cis-undecaprenyl diphospho-N-acetyl-alpha-D-muramoyl-L-alanyl-D-glutamyl-meso-2,6-diaminopimeloyl-D-alanyl-D-alanine + UDP-N-acetyl-alpha-D-glucosamine = di-trans,octa-cis-undecaprenyl diphospho-[N-acetyl-alpha-D-glucosaminyl-(1-&gt;4)]-N-acetyl-alpha-D-muramoyl-L-alanyl-D-glutamyl-meso-2,6-diaminopimeloyl-D-alanyl-D-alanine + UDP + H(+). The protein operates within cell wall biogenesis; peptidoglycan biosynthesis. In terms of biological role, cell wall formation. Catalyzes the transfer of a GlcNAc subunit on undecaprenyl-pyrophosphoryl-MurNAc-pentapeptide (lipid intermediate I) to form undecaprenyl-pyrophosphoryl-MurNAc-(pentapeptide)GlcNAc (lipid intermediate II). The protein is UDP-N-acetylglucosamine--N-acetylmuramyl-(pentapeptide) pyrophosphoryl-undecaprenol N-acetylglucosamine transferase of Mycobacterium sp. (strain JLS).